Here is a 383-residue protein sequence, read N- to C-terminus: Putative glutamate--cysteine ligase 2-1 (383 aa).

Belongs to the glutamate--cysteine ligase type 2 family. YbdK subfamily.

It catalyses the reaction L-cysteine + L-glutamate + ATP = gamma-L-glutamyl-L-cysteine + ADP + phosphate + H(+). ATP-dependent carboxylate-amine ligase which exhibits weak glutamate--cysteine ligase activity. The chain is Putative glutamate--cysteine ligase 2-1 from Arthrobacter sp. (strain FB24).